Consider the following 430-residue polypeptide: Asparagine--tRNA ligase (430 aa).

Belongs to the class-II aminoacyl-tRNA synthetase family. In terms of assembly, homodimer.

The protein resides in the cytoplasm. The catalysed reaction is tRNA(Asn) + L-asparagine + ATP = L-asparaginyl-tRNA(Asn) + AMP + diphosphate + H(+). The polypeptide is Asparagine--tRNA ligase (Staphylococcus aureus (strain bovine RF122 / ET3-1)).